An 81-amino-acid polypeptide reads, in one-letter code: Small ribosomal subunit protein bS16 (81 aa).

This sequence belongs to the bacterial ribosomal protein bS16 family.

This is Small ribosomal subunit protein bS16 from Clostridium beijerinckii (strain ATCC 51743 / NCIMB 8052) (Clostridium acetobutylicum).